The sequence spans 241 residues: Adenosylcobinamide-GDP ribazoletransferase (241 aa).

The next 4 membrane-spanning stretches (helical) occupy residues 34–54, 108–128, 184–206, and 220–240; these read LGLP…AWAF, VGGL…FGWI, LPFS…WTCL, and FLGA…SSLP.

It belongs to the CobS family. The cofactor is Mg(2+).

The protein localises to the cell membrane. The catalysed reaction is alpha-ribazole + adenosylcob(III)inamide-GDP = adenosylcob(III)alamin + GMP + H(+). The enzyme catalyses alpha-ribazole 5'-phosphate + adenosylcob(III)inamide-GDP = adenosylcob(III)alamin 5'-phosphate + GMP + H(+). It functions in the pathway cofactor biosynthesis; adenosylcobalamin biosynthesis; adenosylcobalamin from cob(II)yrinate a,c-diamide: step 7/7. Functionally, joins adenosylcobinamide-GDP and alpha-ribazole to generate adenosylcobalamin (Ado-cobalamin). Also synthesizes adenosylcobalamin 5'-phosphate from adenosylcobinamide-GDP and alpha-ribazole 5'-phosphate. In Methanopyrus kandleri (strain AV19 / DSM 6324 / JCM 9639 / NBRC 100938), this protein is Adenosylcobinamide-GDP ribazoletransferase.